Here is a 247-residue protein sequence, read N- to C-terminus: Adenosylcobinamide-GDP ribazoletransferase (247 aa).

The next 6 membrane-spanning stretches (helical) occupy residues 34–54 (IVMFPFIGLILGGVSGLIFIL), 59–79 (CGIPLAALFCILALALLTGGF), 113–133 (GGLALIFVLLAKILVVSELAL), 138–158 (MLAALAAACAAGRGSAVLLMY), 171–193 (VFIGKVSGRQTCITLGLAIIIAT), and 197–219 (PGMQGLAAMVVTCAAIFILGQLL).

It belongs to the CobS family. The cofactor is Mg(2+).

The protein resides in the cell inner membrane. The enzyme catalyses alpha-ribazole + adenosylcob(III)inamide-GDP = adenosylcob(III)alamin + GMP + H(+). It catalyses the reaction alpha-ribazole 5'-phosphate + adenosylcob(III)inamide-GDP = adenosylcob(III)alamin 5'-phosphate + GMP + H(+). It functions in the pathway cofactor biosynthesis; adenosylcobalamin biosynthesis; adenosylcobalamin from cob(II)yrinate a,c-diamide: step 7/7. In terms of biological role, joins adenosylcobinamide-GDP and alpha-ribazole to generate adenosylcobalamin (Ado-cobalamin). Also synthesizes adenosylcobalamin 5'-phosphate from adenosylcobinamide-GDP and alpha-ribazole 5'-phosphate. The chain is Adenosylcobinamide-GDP ribazoletransferase from Salmonella newport (strain SL254).